Reading from the N-terminus, the 343-residue chain is MESTPKKAPRSKFPALLVVALALVALVFVIWRVDSAPSTNDAYVSADTIDVVPEVSGRIVELAVTDNQAVKQGDLLFRIDPRPYEANLAKSEASLAALDKQIMLTQRSVDAQQFGADSVNATVEKARAAAKQATDTLRRTEPLLKEGFVSAEDVDRARTAQRAAEADLNAVLLQAQSAASAVSGVDALVAQRAAVEADIALTKLHLEMATVRAPFDGRVISLKTSVGQFASAMRPIFTLIDTRHWYVIANFRETDLKNIRSGTPATIRLMSDSGKTFEGKVDSIGYGVLPDDGGLVLGGLPKVSRSINWVRVAQRFPVKIMVDKPDPEMFRIGASAVANLEPQ.

Residues 1–12 are Cytoplasmic-facing; the sequence is MESTPKKAPRSK. The chain crosses the membrane as a helical; Signal-anchor for type II membrane protein span at residues 13 to 33; the sequence is FPALLVVALALVALVFVIWRV. The Periplasmic portion of the chain corresponds to 34–343; it reads DSAPSTNDAY…ASAVANLEPQ (310 aa).

Belongs to the membrane fusion protein (MFP) (TC 8.A.1) family. Could be part of a tripartite efflux system composed of MdtN, MdtO and MdtP.

The protein resides in the cell inner membrane. Functionally, could be involved in resistance to puromycin, acriflavine and tetraphenylarsonium chloride. The chain is Multidrug resistance protein MdtN (mdtN) from Escherichia coli O157:H7.